Reading from the N-terminus, the 152-residue chain is Transcription elongation factor Spt5 (152 aa).

The KOW domain occupies 94–124 (PGDLVEVIAGPFKGQKAKVVKIDESKDEVVV).

Belongs to the archaeal Spt5 family. As to quaternary structure, heterodimer composed of Spt4 and Spt5. Interacts with RNA polymerase (RNAP) independently of nucleic acids. Forms a homodimer in solution.

Stimulates transcription elongation. The sequence is that of Transcription elongation factor Spt5 from Pyrococcus furiosus (strain ATCC 43587 / DSM 3638 / JCM 8422 / Vc1).